A 145-amino-acid polypeptide reads, in one-letter code: Probable flagellum biosynthesis repressor protein FlbT (145 aa).

It belongs to the FlbT family.

Functionally, has a post-transcriptional repressor function in flagellum biogenesis. Associates with the 5'-UTR of fljK mRNA and promotes its degradation. The chain is Probable flagellum biosynthesis repressor protein FlbT from Chelativorans sp. (strain BNC1).